The following is a 237-amino-acid chain: B3 domain-containing protein Os06g0194400 (237 aa).

2 disordered regions span residues 1–23 and 38–82; these read MIEA…RQVE and SAAV…LPEK. Residues 139–230 constitute a DNA-binding region (TF-B3); that stretch reads FVKPMLQSHV…KFKVYIIRAS (92 aa).

The protein localises to the nucleus. This is B3 domain-containing protein Os06g0194400 from Oryza sativa subsp. japonica (Rice).